Here is a 622-residue protein sequence, read N- to C-terminus: Glutamyl-tRNA(Gln) amidotransferase subunit B, mitochondrial (622 aa).

A mitochondrion-targeting transit peptide spans 1 to 54; it reads MSRIPTRELGRYLLQGQICQRGCVASSVSKSRAKQLGRHPLLPHDRHQPTQARH. Residues 30-67 form a disordered region; sequence KSRAKQLGRHPLLPHDRHQPTQARHAHTVTTTATPTQL. Residues 57–67 show a composition bias toward low complexity; sequence TVTTTATPTQL.

It belongs to the GatB/GatE family. GatB subfamily. As to quaternary structure, subunit of the heterotrimeric GatCAB amidotransferase (AdT) complex, composed of A, B and C subunits.

Its subcellular location is the mitochondrion. It catalyses the reaction L-glutamyl-tRNA(Gln) + L-glutamine + ATP + H2O = L-glutaminyl-tRNA(Gln) + L-glutamate + ADP + phosphate + H(+). Allows the formation of correctly charged Gln-tRNA(Gln) through the transamidation of misacylated Glu-tRNA(Gln) in the mitochondria. The reaction takes place in the presence of glutamine and ATP through an activated gamma-phospho-Glu-tRNA(Gln). The chain is Glutamyl-tRNA(Gln) amidotransferase subunit B, mitochondrial from Verticillium alfalfae (strain VaMs.102 / ATCC MYA-4576 / FGSC 10136) (Verticillium wilt of alfalfa).